The chain runs to 526 residues: Cholesterol side-chain cleavage enzyme, mitochondrial (526 aa).

The transit peptide at Met1–Gly36 directs the protein to the mitochondrion. Positions Ser30 to Ser41 are enriched in low complexity. The disordered stretch occupies residues Ser30 to Pro49. Position 458 (Cys458) interacts with heme.

This sequence belongs to the cytochrome P450 family. As to quaternary structure, interacts with FDX1/adrenodoxin. It depends on heme as a cofactor.

The protein resides in the mitochondrion inner membrane. The enzyme catalyses 6 reduced [adrenodoxin] + cholesterol + 3 O2 + 6 H(+) = 4-methylpentanal + pregnenolone + 6 oxidized [adrenodoxin] + 4 H2O. The catalysed reaction is 2 reduced [adrenodoxin] + cholesterol + O2 + 2 H(+) = (22R)-hydroxycholesterol + 2 oxidized [adrenodoxin] + H2O. It carries out the reaction (22R)-hydroxycholesterol + 2 reduced [adrenodoxin] + O2 + 2 H(+) = (20R,22R)-20,22-dihydroxycholesterol + 2 oxidized [adrenodoxin] + H2O. It catalyses the reaction (20R,22R)-20,22-dihydroxycholesterol + 2 reduced [adrenodoxin] + O2 + 2 H(+) = 4-methylpentanal + pregnenolone + 2 oxidized [adrenodoxin] + 2 H2O. Its pathway is lipid metabolism; C21-steroid hormone metabolism. It functions in the pathway steroid metabolism; cholesterol metabolism. A cytochrome P450 monooxygenase that catalyzes the side-chain hydroxylation and cleavage of cholesterol to pregnenolone, the precursor of most steroid hormones. Catalyzes three sequential oxidation reactions of cholesterol, namely the hydroxylation at C22 followed with the hydroxylation at C20 to yield 20R,22R-hydroxycholesterol that is further cleaved between C20 and C22 to yield the C21-steroid pregnenolone and 4-methylpentanal. Mechanistically, uses molecular oxygen inserting one oxygen atom into a substrate and reducing the second into a water molecule. Two electrons are provided by NADPH via a two-protein mitochondrial transfer system comprising flavoprotein FDXR (adrenodoxin/ferredoxin reductase) and nonheme iron-sulfur protein FDX1 or FDX2 (adrenodoxin/ferredoxin). The protein is Cholesterol side-chain cleavage enzyme, mitochondrial of Mus musculus (Mouse).